The sequence spans 143 residues: Phosphoribosyl-AMP cyclohydrolase (143 aa).

A Mg(2+)-binding site is contributed by D86. C87 is a Zn(2+) binding site. Mg(2+)-binding residues include D88 and D90. Residues C103 and C110 each contribute to the Zn(2+) site.

The protein belongs to the PRA-CH family. In terms of assembly, homodimer. It depends on Mg(2+) as a cofactor. Zn(2+) is required as a cofactor.

The protein resides in the cytoplasm. The catalysed reaction is 1-(5-phospho-beta-D-ribosyl)-5'-AMP + H2O = 1-(5-phospho-beta-D-ribosyl)-5-[(5-phospho-beta-D-ribosylamino)methylideneamino]imidazole-4-carboxamide. Its pathway is amino-acid biosynthesis; L-histidine biosynthesis; L-histidine from 5-phospho-alpha-D-ribose 1-diphosphate: step 3/9. Catalyzes the hydrolysis of the adenine ring of phosphoribosyl-AMP. The chain is Phosphoribosyl-AMP cyclohydrolase from Rhodospirillum rubrum (strain ATCC 11170 / ATH 1.1.1 / DSM 467 / LMG 4362 / NCIMB 8255 / S1).